Consider the following 255-residue polypeptide: NAD kinase (255 aa).

Residue Asp44 is the Proton acceptor of the active site. NAD(+) is bound by residues 44–45 (DG), 114–115 (NE), Asp144, Ala152, and 155–160 (TAYNLS).

Belongs to the NAD kinase family. The cofactor is a divalent metal cation.

The protein localises to the cytoplasm. The catalysed reaction is NAD(+) + ATP = ADP + NADP(+) + H(+). Functionally, involved in the regulation of the intracellular balance of NAD and NADP, and is a key enzyme in the biosynthesis of NADP. Catalyzes specifically the phosphorylation on 2'-hydroxyl of the adenosine moiety of NAD to yield NADP. This Hyphomonas neptunium (strain ATCC 15444) protein is NAD kinase.